The chain runs to 342 residues: Cellular tumor antigen p53 (342 aa).

Residues 1–35 (MEEADLTLPLSQDTFHDLWNNVFLSTENESLAPPE) form a transcription activation (acidic) region. The DNA-binding element occupies 68 to 255 (NYAGEHGFNL…KTEEGNLEKS (188 aa)). Positions 142, 145, 201, and 205 each coordinate Zn(2+). Residues 236–243 (RVCACPGR) are interaction with DNA. Residues 244 to 256 (DRKTEEGNLEKSG) are compositionally biased toward basic and acidic residues. Positions 244–287 (DRKTEEGNLEKSGTKQTKKRKSAPAPDTSTAKKSKSASSGEDED) are disordered. A Bipartite nuclear localization signal motif is present at residues 261 to 278 (KKRKSAPAPDTSTAKKSK). Low complexity predominate over residues 271–282 (TSTAKKSKSASS). An oligomerization region spans residues 288 to 317 (KEIYTLSIRGRNRYLWFKSLNDGLELMDKT). A Nuclear export signal motif is present at residues 302-313 (LWFKSLNDGLEL). Residues 318-342 (GPKIKQEIPAPSSGKRLLKGGSDSD) are disordered. Residues 319–336 (PKIKQEIPAPSSGKRLLK) are basic (repression of DNA-binding).

Belongs to the p53 family. In terms of assembly, binds DNA as a homotetramer. It depends on Zn(2+) as a cofactor.

The protein localises to the cytoplasm. The protein resides in the nucleus. Functionally, multifunctional transcription factor that induces cell cycle arrest, DNA repair or apoptosis upon binding to its target DNA sequence. Acts as a tumor suppressor in many tumor types; induces growth arrest or apoptosis depending on the physiological circumstances and cell type. Negatively regulates cell division by controlling expression of a set of genes required for this process. One of the activated genes is an inhibitor of cyclin-dependent kinases. Apoptosis induction seems to be mediated either by stimulation of BAX and FAS antigen expression, or by repression of Bcl-2 expression. The sequence is that of Cellular tumor antigen p53 (tp53) from Xiphophorus hellerii (Green swordtail).